Consider the following 390-residue polypeptide: tRNA-specific 2-thiouridylase MnmA (390 aa).

ATP is bound by residues 36-43 (GMSGGVDS) and M62. An interaction with target base in tRNA region spans residues 122–124 (NPD). The active-site Nucleophile is the C127. C127 and C223 form a disulfide bridge. G151 is a binding site for ATP. The tract at residues 173–175 (KDQ) is interaction with tRNA. C223 functions as the Cysteine persulfide intermediate in the catalytic mechanism. Residues 335–336 (RY) form an interaction with tRNA region.

It belongs to the MnmA/TRMU family.

The protein resides in the cytoplasm. It catalyses the reaction S-sulfanyl-L-cysteinyl-[protein] + uridine(34) in tRNA + AH2 + ATP = 2-thiouridine(34) in tRNA + L-cysteinyl-[protein] + A + AMP + diphosphate + H(+). Its function is as follows. Catalyzes the 2-thiolation of uridine at the wobble position (U34) of tRNA, leading to the formation of s(2)U34. The polypeptide is tRNA-specific 2-thiouridylase MnmA (Marinomonas sp. (strain MWYL1)).